Consider the following 704-residue polypeptide: DNA ligase (704 aa).

Residues aspartate 58–aspartate 62, serine 107–leucine 108, and glutamate 138 each bind NAD(+). Residue lysine 140 is the N6-AMP-lysine intermediate of the active site. 4 residues coordinate NAD(+): arginine 161, glutamate 199, lysine 323, and lysine 347. Positions 441, 444, 459, and 464 each coordinate Zn(2+). A BRCT domain is found at glutamate 621–glutamate 704.

This sequence belongs to the NAD-dependent DNA ligase family. LigA subfamily. It depends on Mg(2+) as a cofactor. Mn(2+) serves as cofactor.

It carries out the reaction NAD(+) + (deoxyribonucleotide)n-3'-hydroxyl + 5'-phospho-(deoxyribonucleotide)m = (deoxyribonucleotide)n+m + AMP + beta-nicotinamide D-nucleotide.. Its function is as follows. DNA ligase that catalyzes the formation of phosphodiester linkages between 5'-phosphoryl and 3'-hydroxyl groups in double-stranded DNA using NAD as a coenzyme and as the energy source for the reaction. It is essential for DNA replication and repair of damaged DNA. The sequence is that of DNA ligase from Sulfurihydrogenibium sp. (strain YO3AOP1).